Here is a 186-residue protein sequence, read N- to C-terminus: Elongation factor P (186 aa).

This sequence belongs to the elongation factor P family.

The protein resides in the cytoplasm. It participates in protein biosynthesis; polypeptide chain elongation. Functionally, involved in peptide bond synthesis. Stimulates efficient translation and peptide-bond synthesis on native or reconstituted 70S ribosomes in vitro. Probably functions indirectly by altering the affinity of the ribosome for aminoacyl-tRNA, thus increasing their reactivity as acceptors for peptidyl transferase. The chain is Elongation factor P from Prochlorococcus marinus (strain MIT 9313).